The following is a 327-amino-acid chain: Methionyl-tRNA formyltransferase (327 aa).

Residue 121–124 (SLLP) participates in (6S)-5,6,7,8-tetrahydrofolate binding.

Belongs to the Fmt family.

It catalyses the reaction L-methionyl-tRNA(fMet) + (6R)-10-formyltetrahydrofolate = N-formyl-L-methionyl-tRNA(fMet) + (6S)-5,6,7,8-tetrahydrofolate + H(+). Functionally, attaches a formyl group to the free amino group of methionyl-tRNA(fMet). The formyl group appears to play a dual role in the initiator identity of N-formylmethionyl-tRNA by promoting its recognition by IF2 and preventing the misappropriation of this tRNA by the elongation apparatus. This is Methionyl-tRNA formyltransferase from Burkholderia pseudomallei (strain 1710b).